A 475-amino-acid chain; its full sequence is Aspartyl/glutamyl-tRNA(Asn/Gln) amidotransferase subunit B (475 aa).

Belongs to the GatB/GatE family. GatB subfamily. In terms of assembly, heterotrimer of A, B and C subunits.

The catalysed reaction is L-glutamyl-tRNA(Gln) + L-glutamine + ATP + H2O = L-glutaminyl-tRNA(Gln) + L-glutamate + ADP + phosphate + H(+). It carries out the reaction L-aspartyl-tRNA(Asn) + L-glutamine + ATP + H2O = L-asparaginyl-tRNA(Asn) + L-glutamate + ADP + phosphate + 2 H(+). Its function is as follows. Allows the formation of correctly charged Asn-tRNA(Asn) or Gln-tRNA(Gln) through the transamidation of misacylated Asp-tRNA(Asn) or Glu-tRNA(Gln) in organisms which lack either or both of asparaginyl-tRNA or glutaminyl-tRNA synthetases. The reaction takes place in the presence of glutamine and ATP through an activated phospho-Asp-tRNA(Asn) or phospho-Glu-tRNA(Gln). The sequence is that of Aspartyl/glutamyl-tRNA(Asn/Gln) amidotransferase subunit B from Agathobacter rectalis (strain ATCC 33656 / DSM 3377 / JCM 17463 / KCTC 5835 / VPI 0990) (Eubacterium rectale).